We begin with the raw amino-acid sequence, 1333 residues long: DNA-directed RNA polymerase subunit beta' (1333 aa).

C60, C62, C75, and C78 together coordinate Zn(2+). D535, D537, and D539 together coordinate Mg(2+). The Zn(2+) site is built by C901, C983, C990, and C993.

It belongs to the RNA polymerase beta' chain family. In terms of assembly, the RNAP catalytic core consists of 2 alpha, 1 beta, 1 beta' and 1 omega subunit. When a sigma factor is associated with the core the holoenzyme is formed, which can initiate transcription. Requires Mg(2+) as cofactor. The cofactor is Zn(2+).

It catalyses the reaction RNA(n) + a ribonucleoside 5'-triphosphate = RNA(n+1) + diphosphate. Its function is as follows. DNA-dependent RNA polymerase catalyzes the transcription of DNA into RNA using the four ribonucleoside triphosphates as substrates. The protein is DNA-directed RNA polymerase subunit beta' of Corynebacterium glutamicum (strain ATCC 13032 / DSM 20300 / JCM 1318 / BCRC 11384 / CCUG 27702 / LMG 3730 / NBRC 12168 / NCIMB 10025 / NRRL B-2784 / 534).